A 151-amino-acid polypeptide reads, in one-letter code: 3-dehydroquinate dehydratase (151 aa).

The Proton acceptor role is filled by Tyr24. Substrate is bound by residues Asn76, His82, and Asp89. His102 (proton donor) is an active-site residue. Residues 103 to 104 and Arg113 contribute to the substrate site; that span reads VS.

Belongs to the type-II 3-dehydroquinase family. Homododecamer.

The catalysed reaction is 3-dehydroquinate = 3-dehydroshikimate + H2O. The protein operates within metabolic intermediate biosynthesis; chorismate biosynthesis; chorismate from D-erythrose 4-phosphate and phosphoenolpyruvate: step 3/7. In terms of biological role, catalyzes a trans-dehydration via an enolate intermediate. In Rhodopseudomonas palustris (strain TIE-1), this protein is 3-dehydroquinate dehydratase.